We begin with the raw amino-acid sequence, 328 residues long: 3-dehydroquinate synthase (328 aa).

This sequence belongs to the archaeal-type DHQ synthase family.

The catalysed reaction is 2-amino-2,3,7-trideoxy-D-lyxo-hept-6-ulosonate + NAD(+) + H2O = 3-dehydroquinate + NH4(+) + NADH + H(+). Catalyzes the oxidative deamination and cyclization of 2-amino-3,7-dideoxy-D-threo-hept-6-ulosonic acid (ADH) to yield 3-dehydroquinate (DHQ), which is fed into the canonical shikimic pathway of aromatic amino acid biosynthesis. The sequence is that of 3-dehydroquinate synthase from Methanoculleus marisnigri (strain ATCC 35101 / DSM 1498 / JR1).